The chain runs to 466 residues: Na(+)/H(+) antiporter NhaA (466 aa).

11 helical membrane passes run 32–52 (VGGVLLLLAAITALIWANVPA), 74–94 (LSVQHWAADGLLAVFFFVAGI), 111–131 (AALPVAAALCGMAVPALVYTL), 142–162 (GWAVPTATDIAFALAVLAVIG), 172–192 (FLLTLAVVDDLFAILIIAVFF), 195–215 (DLNFAALAGAVIGLAVFWLLL), 221–241 (GWYVYVPLALVIWGLMYNSGI), 280–300 (GLAVPLFALFSAGVVISGGAL), 310–330 (LGVVLGLVVGKAIGIFGGTWL), 348–368 (VFAVASLAGIGFTVSLLIGEL), and 379–399 (EVKAAVLTGSLLAALIATTLL).

The protein belongs to the NhaA Na(+)/H(+) (TC 2.A.33) antiporter family.

The protein resides in the cell membrane. The enzyme catalyses Na(+)(in) + 2 H(+)(out) = Na(+)(out) + 2 H(+)(in). Na(+)/H(+) antiporter that extrudes sodium in exchange for external protons. The protein is Na(+)/H(+) antiporter NhaA of Streptomyces avermitilis (strain ATCC 31267 / DSM 46492 / JCM 5070 / NBRC 14893 / NCIMB 12804 / NRRL 8165 / MA-4680).